A 241-amino-acid chain; its full sequence is tRNA (guanine-N(1)-)-methyltransferase (241 aa).

S-adenosyl-L-methionine is bound by residues Gly-112 and 131 to 136; that span reads LGDFVL.

It belongs to the RNA methyltransferase TrmD family. In terms of assembly, homodimer.

Its subcellular location is the cytoplasm. The enzyme catalyses guanosine(37) in tRNA + S-adenosyl-L-methionine = N(1)-methylguanosine(37) in tRNA + S-adenosyl-L-homocysteine + H(+). Functionally, specifically methylates guanosine-37 in various tRNAs. The chain is tRNA (guanine-N(1)-)-methyltransferase from Clostridium novyi (strain NT).